A 251-amino-acid polypeptide reads, in one-letter code: Hydroxyacylglutathione hydrolase GloB (251 aa).

Zn(2+) contacts are provided by histidine 53, histidine 55, aspartate 57, histidine 58, histidine 110, and aspartate 127. Residues 136–138 (RLF), 165–167 (HEY), and 245–248 (RSKK) contribute to the substrate site. Residue histidine 165 participates in Zn(2+) binding.

Belongs to the metallo-beta-lactamase superfamily. Glyoxalase II family. In terms of assembly, monomer. Requires Zn(2+) as cofactor.

It catalyses the reaction an S-(2-hydroxyacyl)glutathione + H2O = a 2-hydroxy carboxylate + glutathione + H(+). It carries out the reaction (R)-S-lactoylglutathione + H2O = (R)-lactate + glutathione + H(+). Its pathway is secondary metabolite metabolism; methylglyoxal degradation; (R)-lactate from methylglyoxal: step 2/2. With respect to regulation, is inhibited by Cu(2+). Functionally, type II glyoxalase that catalyzes the hydrolysis of (R)-S-lactoylglutathione to (R)-lactate and glutathione. Is more efficient than the isozyme GloC, and plays a major contribution to methylglyoxal (MG) detoxification in E.coli. The two isoenzymes have additive effects and ensure maximal MG degradation. The polypeptide is Hydroxyacylglutathione hydrolase GloB (Escherichia coli (strain K12)).